Consider the following 231-residue polypeptide: Cytolethal distending toxin subunit A (231 aa).

Residues 1 to 15 form the signal peptide; sequence MRLLFFLLITLLFAA. A lipid anchor (N-palmitoyl cysteine) is attached at Cys16. Cys16 is lipidated: S-diacylglycerol cysteine. The segment at 20 to 51 is disordered; sequence PKVHQPKHSSKTEKDLGIGLSPTPPPNERIPG. A mediates binding to target cells region spans residues 99 to 110; that stretch reads WALKPRNWVWGY. Positions 130-217 constitute a Ricin B-type lectin domain; that stretch reads SNGQVIIKNM…SSNLDQQWYI (88 aa).

As to quaternary structure, heterotrimer of 3 subunits, CdtA, CdtB and CdtC.

The protein localises to the cell outer membrane. CDTs are cytotoxins which induce cell distension, growth arrest in G2/M phase, nucleus swelling, and chromatin fragmentation in HeLa cells. The sequence is that of Cytolethal distending toxin subunit A (cdtA) from Helicobacter hepaticus (strain ATCC 51449 / 3B1).